We begin with the raw amino-acid sequence, 168 residues long: Ribosome maturation factor RimM (168 aa).

Residues 94-167 form the PRC barrel domain; the sequence is DGQYYYHQII…FVTVELMEGL (74 aa).

Belongs to the RimM family. As to quaternary structure, binds ribosomal protein uS19.

It localises to the cytoplasm. In terms of biological role, an accessory protein needed during the final step in the assembly of 30S ribosomal subunit, possibly for assembly of the head region. Essential for efficient processing of 16S rRNA. May be needed both before and after RbfA during the maturation of 16S rRNA. It has affinity for free ribosomal 30S subunits but not for 70S ribosomes. This is Ribosome maturation factor RimM from Limosilactobacillus reuteri (strain DSM 20016) (Lactobacillus reuteri).